Reading from the N-terminus, the 480-residue chain is 11S globulin subunit beta (480 aa).

The N-terminal stretch at 1–21 is a signal peptide; sequence MARSSLFTFLCLAVFINGCLS. Residue Gln22 is modified to Pyrrolidone carboxylic acid. 2 disulfides stabilise this stretch: Cys48/Cys81 and Cys124/Cys303. Cupin type-1 domains lie at 51-251 and 309-458; these read ENLR…GLVR and QNIG…EEAQ. Positions 408 and 468 each coordinate Mg(2+).

This sequence belongs to the 11S seed storage protein (globulins) family. In terms of assembly, hexamer; each subunit is composed of an acidic and a basic chain derived from a single precursor and linked by a disulfide bond.

Functionally, this is a seed storage protein. The chain is 11S globulin subunit beta from Cucurbita maxima (Pumpkin).